Reading from the N-terminus, the 447-residue chain is Retinoic acid receptor alpha (447 aa).

The modulating stretch occupies residues 1-79 (MAGKGNPVPG…PPPPPRVYKP (79 aa)). A compositionally biased stretch (polar residues) spans 47 to 61 (TPSPATIETQSTSSE). The disordered stretch occupies residues 47 to 72 (TPSPATIETQSTSSEEIVPSPPSPPP). NR C4-type zinc fingers lie at residues 80–100 (CFVC…CEGC) and 116–140 (CHRE…LQKC). The nuclear receptor DNA-binding region spans 80 to 145 (CFVCQDKSSG…RLQKCLEVGM (66 aa)). The tract at residues 146–174 (SKESVRNDRNKKKKDEKKPECIENYVLSP) is hinge. The 235-residue stretch at 175–409 (DTEQMINRVR…PLIQEMLENS (235 aa)) folds into the NR LBD domain. The 9aaTAD signature appears at 400–408 (PLIQEMLEN). The interval 407-447 (ENSEGLESGATGSRPSGAPPGSCSPSLSPSSAQSSPPTQSP) is disordered. Over residues 414-447 (SGATGSRPSGAPPGSCSPSLSPSSAQSSPPTQSP) the composition is skewed to low complexity.

It belongs to the nuclear hormone receptor family. NR1 subfamily. Heterodimer; with an rxr molecule. Binds DNA preferentially as a rar/rxr heterodimer.

Its subcellular location is the nucleus. Its function is as follows. Receptor for retinoic acid. Retinoic acid receptors bind as heterodimers to their target response elements in response to their ligands, all-trans or 9-cis retinoic acid, and regulate gene expression in various biological processes. The rar/rxr heterodimers bind to the retinoic acid response elements (RARE) composed of tandem 5'-AGGTCA-3' sites known as DR1-DR5. The chain is Retinoic acid receptor alpha (rara) from Takifugu rubripes (Japanese pufferfish).